The sequence spans 354 residues: Uroporphyrinogen decarboxylase (354 aa).

Residues 27–31, D77, Y154, T209, and H327 each bind substrate; that span reads RQAGR.

It belongs to the uroporphyrinogen decarboxylase family. Homodimer.

Its subcellular location is the cytoplasm. It catalyses the reaction uroporphyrinogen III + 4 H(+) = coproporphyrinogen III + 4 CO2. It participates in porphyrin-containing compound metabolism; protoporphyrin-IX biosynthesis; coproporphyrinogen-III from 5-aminolevulinate: step 4/4. In terms of biological role, catalyzes the decarboxylation of four acetate groups of uroporphyrinogen-III to yield coproporphyrinogen-III. This chain is Uroporphyrinogen decarboxylase, found in Klebsiella pneumoniae subsp. pneumoniae (strain ATCC 700721 / MGH 78578).